A 137-amino-acid polypeptide reads, in one-letter code: UPF0148 protein MJ0890 (137 aa).

Belongs to the UPF0148 family.

This is UPF0148 protein MJ0890 from Methanocaldococcus jannaschii (strain ATCC 43067 / DSM 2661 / JAL-1 / JCM 10045 / NBRC 100440) (Methanococcus jannaschii).